The following is a 588-amino-acid chain: Proline--tRNA ligase (588 aa).

This sequence belongs to the class-II aminoacyl-tRNA synthetase family. ProS type 1 subfamily. As to quaternary structure, homodimer.

Its subcellular location is the cytoplasm. It carries out the reaction tRNA(Pro) + L-proline + ATP = L-prolyl-tRNA(Pro) + AMP + diphosphate. In terms of biological role, catalyzes the attachment of proline to tRNA(Pro) in a two-step reaction: proline is first activated by ATP to form Pro-AMP and then transferred to the acceptor end of tRNA(Pro). As ProRS can inadvertently accommodate and process non-cognate amino acids such as alanine and cysteine, to avoid such errors it has two additional distinct editing activities against alanine. One activity is designated as 'pretransfer' editing and involves the tRNA(Pro)-independent hydrolysis of activated Ala-AMP. The other activity is designated 'posttransfer' editing and involves deacylation of mischarged Ala-tRNA(Pro). The misacylated Cys-tRNA(Pro) is not edited by ProRS. The sequence is that of Proline--tRNA ligase from Corynebacterium glutamicum (strain ATCC 13032 / DSM 20300 / JCM 1318 / BCRC 11384 / CCUG 27702 / LMG 3730 / NBRC 12168 / NCIMB 10025 / NRRL B-2784 / 534).